Reading from the N-terminus, the 239-residue chain is Pimeloyl-[acyl-carrier protein] methyl ester esterase (239 aa).

Substrate is bound by residues Trp20, 77-78, and 138-142; these read SM and FISLQ. Residue Ser77 is the Nucleophile of the active site. Residues Asp192 and His220 contribute to the active site. Residue His220 participates in substrate binding.

The protein belongs to the AB hydrolase superfamily. Carboxylesterase BioH family. Monomer.

The protein localises to the cytoplasm. The catalysed reaction is 6-carboxyhexanoyl-[ACP] methyl ester + H2O = 6-carboxyhexanoyl-[ACP] + methanol + H(+). The protein operates within cofactor biosynthesis; biotin biosynthesis. In terms of biological role, the physiological role of BioH is to remove the methyl group introduced by BioC when the pimeloyl moiety is complete. It allows to synthesize pimeloyl-ACP via the fatty acid synthetic pathway through the hydrolysis of the ester bonds of pimeloyl-ACP esters. The chain is Pimeloyl-[acyl-carrier protein] methyl ester esterase from Legionella pneumophila (strain Corby).